The chain runs to 586 residues: Phosphomethylpyrimidine synthase (586 aa).

The segment at methionine 1–glycine 58 is disordered. Residues valine 22 to glutamate 39 are compositionally biased toward basic and acidic residues. Residues asparagine 193, methionine 222, tyrosine 251, histidine 287, serine 307–glycine 309, aspartate 348–arginine 351, and glutamate 387 each bind substrate. Histidine 391 contacts Zn(2+). Residue tyrosine 414 coordinates substrate. Position 455 (histidine 455) interacts with Zn(2+). Residues cysteine 535, cysteine 538, and cysteine 543 each contribute to the [4Fe-4S] cluster site.

The protein belongs to the ThiC family. It depends on [4Fe-4S] cluster as a cofactor.

The catalysed reaction is 5-amino-1-(5-phospho-beta-D-ribosyl)imidazole + S-adenosyl-L-methionine = 4-amino-2-methyl-5-(phosphooxymethyl)pyrimidine + CO + 5'-deoxyadenosine + formate + L-methionine + 3 H(+). It participates in cofactor biosynthesis; thiamine diphosphate biosynthesis. Functionally, catalyzes the synthesis of the hydroxymethylpyrimidine phosphate (HMP-P) moiety of thiamine from aminoimidazole ribotide (AIR) in a radical S-adenosyl-L-methionine (SAM)-dependent reaction. The protein is Phosphomethylpyrimidine synthase of Bacillus mycoides (strain KBAB4) (Bacillus weihenstephanensis).